The following is a 237-amino-acid chain: LexA repressor (237 aa).

Positions 26 to 46 (FDEMKEALDLRSKSGIHRLIT) form a DNA-binding region, H-T-H motif. The interval 84–110 (GFSPSVIEGGAQPKPSSRDLAPARSSG) is disordered. Active-site for autocatalytic cleavage activity residues include serine 158 and lysine 196.

It belongs to the peptidase S24 family. As to quaternary structure, homodimer.

It carries out the reaction Hydrolysis of Ala-|-Gly bond in repressor LexA.. Represses a number of genes involved in the response to DNA damage (SOS response), including recA and lexA. In the presence of single-stranded DNA, RecA interacts with LexA causing an autocatalytic cleavage which disrupts the DNA-binding part of LexA, leading to derepression of the SOS regulon and eventually DNA repair. The chain is LexA repressor from Parvibaculum lavamentivorans (strain DS-1 / DSM 13023 / NCIMB 13966).